The chain runs to 270 residues: UPF0354 protein BCA_4815 (270 aa).

This sequence belongs to the UPF0354 family.

In Bacillus cereus (strain 03BB102), this protein is UPF0354 protein BCA_4815.